The chain runs to 363 residues: 3-dehydroquinate synthase (363 aa).

Residues 107–111, 131–132, Lys-144, and Lys-153 each bind NAD(+); these read GVIGD and TT. Zn(2+) contacts are provided by Glu-186, His-251, and His-268.

It belongs to the sugar phosphate cyclases superfamily. Dehydroquinate synthase family. Co(2+) is required as a cofactor. Zn(2+) serves as cofactor. It depends on NAD(+) as a cofactor.

The protein localises to the cytoplasm. The catalysed reaction is 7-phospho-2-dehydro-3-deoxy-D-arabino-heptonate = 3-dehydroquinate + phosphate. Its pathway is metabolic intermediate biosynthesis; chorismate biosynthesis; chorismate from D-erythrose 4-phosphate and phosphoenolpyruvate: step 2/7. Functionally, catalyzes the conversion of 3-deoxy-D-arabino-heptulosonate 7-phosphate (DAHP) to dehydroquinate (DHQ). This chain is 3-dehydroquinate synthase, found in Nostoc punctiforme (strain ATCC 29133 / PCC 73102).